Reading from the N-terminus, the 244-residue chain is Small ribosomal subunit protein uS2m (244 aa).

This sequence belongs to the universal ribosomal protein uS2 family.

Its subcellular location is the mitochondrion. This is Small ribosomal subunit protein uS2m (mrps2) from Dictyostelium discoideum (Social amoeba).